The chain runs to 630 residues: Ubiquitin-like modifier-activating enzyme ATG7 (630 aa).

The GXGXXG motif motif lies at 331 to 336; sequence GAGTLG. C507 acts as the Glycyl thioester intermediate in catalysis. The homodimerization stretch occupies residues 591-630; the sequence is ALEHPLYLEEISGLSVIKQEVERLGNDVFEWEDDESDEIA.

The protein belongs to the ATG7 family. As to quaternary structure, homodimer; homodimerization is required for ATP-binding. Interacts with ATG8 through a thioester bond between Cys-507 and the C-terminal 'Gly-116' of ATG8 and with ATG12 through a thioester bond between Cys-507 and the C-terminal 'Gly-186' of ATG12. Also interacts with ATG3.

Its subcellular location is the cytoplasm. It is found in the preautophagosomal structure. In terms of biological role, E1-like activating enzyme involved in the 2 ubiquitin-like systems required for cytoplasm to vacuole transport (Cvt) and autophagy. Activates ATG12 for its conjugation with ATG5 and ATG8 for its conjugation with phosphatidylethanolamine. Both systems are needed for the ATG8 association to Cvt vesicles and autophagosomes membranes. Autophagy is essential for maintenance of amino acid levels and protein synthesis under nitrogen starvation. Required for selective autophagic degradation of the nucleus (nucleophagy) as well as for mitophagy which contributes to regulate mitochondrial quantity and quality by eliminating the mitochondria to a basal level to fulfill cellular energy requirements and preventing excess ROS production. Plays a role in the regulation of filamentous growth and chronological longevity. The sequence is that of Ubiquitin-like modifier-activating enzyme ATG7 (ATG7) from Saccharomyces cerevisiae (strain ATCC 204508 / S288c) (Baker's yeast).